We begin with the raw amino-acid sequence, 495 residues long: Inner membrane ALBINO3-like protein 1, chloroplastic (495 aa).

The helical transmembrane segment at 76 to 96 threads the bilayer; sequence LGAIYVLADASASTAAAAVMP. At 97–206 the chain is on the stromal side; that stretch reads TAVDSAAGAA…VLYEQAGVNP (110 aa). The helical transmembrane segment at 207 to 227 threads the bilayer; sequence LAGCLPTLATIPIFIGLFSSL. The Lumenal portion of the chain corresponds to 228–273; sequence TNVANDGLLDTQGFYFVPSLAGPTTMAMRQSGLGTSWLWPLGPDGA. Residues 274–294 traverse the membrane as a helical segment; the sequence is PPIGWEDAAAYLTLPLLLVAV. At 295 to 317 the chain is on the stromal side; the sequence is QYASSSVTSPPIDPKDENANTQR. Residues 318 to 338 form a helical membrane-spanning segment; sequence ALLVFLPLMVGWFSLNVPAGL. Over 339 to 441 the chain is Lumenal; the sequence is SLYYLANTVL…ASVSLSVDDS (103 aa). The chain crosses the membrane as a helical span at residues 442 to 462; that stretch reads TAAIAGTATMAVTAGAPAAAM. At 463-495 the chain is on the stromal side; it reads DPSKVNRRCKRRRLTSLVQDGSTASAAVAGASA.

This sequence belongs to the OXA1/ALB3/YidC (TC 2.A.9.2) family. In terms of assembly, associates with the LHCII complex and with the psaE subunit of the LHCI complex.

The protein resides in the plastid. The protein localises to the chloroplast thylakoid membrane. Required for the insertion of some light-harvesting complexes (LHC) proteins into the chloroplast thylakoid membrane. Essential for the assembly and activity of LHC I and II. Its function is probably partly distinct from that of ALB3.2. This is Inner membrane ALBINO3-like protein 1, chloroplastic (ALB3.1) from Chlamydomonas reinhardtii (Chlamydomonas smithii).